The primary structure comprises 450 residues: Phosphoglucosamine mutase 2 (450 aa).

Ser-101 acts as the Phosphoserine intermediate in catalysis. Residues Ser-101, Asp-245, Asp-247, and Asp-249 each coordinate Mg(2+). Ser-101 carries the phosphoserine modification.

This sequence belongs to the phosphohexose mutase family. Mg(2+) serves as cofactor. Activated by phosphorylation.

The catalysed reaction is alpha-D-glucosamine 1-phosphate = D-glucosamine 6-phosphate. Catalyzes the conversion of glucosamine-6-phosphate to glucosamine-1-phosphate. This Shewanella sp. (strain MR-7) protein is Phosphoglucosamine mutase 2.